The primary structure comprises 239 residues: MQKLELLYEGKAKRIYRTESADMVWVEYKDSATAFNGEKKETITGKGRLNNEITTLLFRKLQEVGIKTHFVEKLSETEQLVKKVSIIPLEVVTRNVIAGSLSKRLGMEEGTVLAEPIVEFYFKDDDLGDPLVTEDHIRVLNVASPEQVSVLRDMALQINQVLIDHFASCRVRLVDFKLEFGVTDEGAIILADEISPDTCRLWDETSNEKFDKDVFRRDLGNLTDAYEEILKRLGGISHV.

Belongs to the SAICAR synthetase family.

It catalyses the reaction 5-amino-1-(5-phospho-D-ribosyl)imidazole-4-carboxylate + L-aspartate + ATP = (2S)-2-[5-amino-1-(5-phospho-beta-D-ribosyl)imidazole-4-carboxamido]succinate + ADP + phosphate + 2 H(+). The protein operates within purine metabolism; IMP biosynthesis via de novo pathway; 5-amino-1-(5-phospho-D-ribosyl)imidazole-4-carboxamide from 5-amino-1-(5-phospho-D-ribosyl)imidazole-4-carboxylate: step 1/2. In Bacillus cereus (strain 03BB102), this protein is Phosphoribosylaminoimidazole-succinocarboxamide synthase.